A 252-amino-acid polypeptide reads, in one-letter code: MDNVKLVKNGVLRLPPGFRFHPTDEELVVQYLKRKVCSSPLPASIIPEFDVCRADPWDLPGNLEKERYFFSTREAKYPNGNRSNRATGSGYWKATGIDKRVVTSRGNQIVGLKKTLVFYKGKPPHGSRTDWIMHEYRLSSSPPSSMGPTQNWVLCRIFLKKRAGNKNDDDDGDSRNLRHNNNNNSSDQIEIITTDQTDDKTKPIFFDFMRKERTTDLNLLPSSPSSDHASSGVTTEIFSSSDEETSSCNSFR.

Residues 14–160 (LPPGFRFHPT…NWVLCRIFLK (147 aa)) enclose the NAC domain. The DNA-binding element occupies 110-166 (VGLKKTLVFYKGKPPHGSRTDWIMHEYRLSSSPPSSMGPTQNWVLCRIFLKKRAGNK). Disordered stretches follow at residues 165 to 194 (NKND…IITT) and 217 to 252 (LNLL…NSFR). Low complexity-rich tracts occupy residues 180-194 (NNNN…IITT) and 219-252 (LLPS…NSFR). Positions 213–226 (RTTDLNLLPSSPSS) are PEST-like.

As to quaternary structure, interacts with NAC007/VND4, NAC026/VND5 and NAC030/VND7. Interacts with the mungbean yellow mosaic virus (MYMV) AC1 replication-associated protein. In terms of tissue distribution, expressed in xylem and phloem cells in roots and inflorescence stems. Highly expressed in senescent leaves. Expressed in roots, and abscission and dehiscence tissues, such as axils of bracts and abscission zones in cauline leaves and siliques.

It is found in the nucleus. Transcriptional repressor that negatively regulates the expression of genes involved in xylem vessel formation. Represses the transcriptional activation activity of NAC030/VND7, which regulates protoxylem vessel differentiation by promoting immature xylem vessel-specific genes expression. Transcriptional activator that regulates the COLD-REGULATED (COR15A and COR15B) and RESPONSIVE TO DEHYDRATION (LTI78/RD29A and LTI65/RD29B) genes by binding directly to their promoters. Mediates signaling crosstalk between salt stress response and leaf aging process. May play a role in DNA replication of mungbean yellow mosaic virus. This is NAC domain-containing protein 83 from Arabidopsis thaliana (Mouse-ear cress).